The chain runs to 389 residues: Adenylyltransferase and sulfurtransferase uba4 (389 aa).

ATP contacts are provided by residues Gly-40, Asp-61, 68 to 72 (SNLHR), Lys-85, and 129 to 130 (DT). Zn(2+)-binding residues include Cys-171 and Cys-174. Catalysis depends on Cys-188, which acts as the Glycyl thioester intermediate; for adenylyltransferase activity. Cys-252 and Cys-255 together coordinate Zn(2+). Residues 298-387 (AQRAPYLVDV…WSRQIDPNFP (90 aa)) enclose the Rhodanese domain. The active-site Cysteine persulfide intermediate is the Cys-347.

In the N-terminal section; belongs to the HesA/MoeB/ThiF family. UBA4 subfamily. It depends on Zn(2+) as a cofactor.

Its subcellular location is the cytoplasm. It localises to the cytosol. The enzyme catalyses [molybdopterin-synthase sulfur-carrier protein]-C-terminal Gly-Gly + ATP + H(+) = [molybdopterin-synthase sulfur-carrier protein]-C-terminal Gly-Gly-AMP + diphosphate. The catalysed reaction is [molybdopterin-synthase sulfur-carrier protein]-C-terminal Gly-Gly-AMP + S-sulfanyl-L-cysteinyl-[cysteine desulfurase] + AH2 = [molybdopterin-synthase sulfur-carrier protein]-C-terminal-Gly-aminoethanethioate + L-cysteinyl-[cysteine desulfurase] + A + AMP + 2 H(+). It participates in tRNA modification; 5-methoxycarbonylmethyl-2-thiouridine-tRNA biosynthesis. The protein operates within cofactor biosynthesis; molybdopterin biosynthesis. Plays a central role in 2-thiolation of mcm(5)S(2)U at tRNA wobble positions of cytosolic tRNA(Lys), tRNA(Glu) and tRNA(Gln). Also essential during biosynthesis of the molybdenum cofactor. Acts by mediating the C-terminal thiocarboxylation of sulfur carriers URM1 and CNX5/MOCS2A. Its N-terminus first activates urm1 and mocs2a as acyl-adenylates (-COAMP), then the persulfide sulfur on the catalytic cysteine is transferred to URM1 and CNX5/MOCS2A to form thiocarboxylation (-COSH) of their C-terminus. The reaction probably involves hydrogen sulfide that is generated from the persulfide intermediate and that acts as a nucleophile towards URM1 and CNX5/MOCS2A. Subsequently, a transient disulfide bond is formed. Does not use thiosulfate as sulfur donor; NFS1 probably acting as a sulfur donor for thiocarboxylation reactions. Required for growth on nitrate as a sole nitrogen source. The protein is Adenylyltransferase and sulfurtransferase uba4 of Ogataea parapolymorpha (strain ATCC 26012 / BCRC 20466 / JCM 22074 / NRRL Y-7560 / DL-1) (Yeast).